Reading from the N-terminus, the 307-residue chain is Aspartate carbamoyltransferase catalytic subunit (307 aa).

Residues arginine 59 and threonine 60 each contribute to the carbamoyl phosphate site. Residue lysine 87 coordinates L-aspartate. Carbamoyl phosphate contacts are provided by arginine 109, histidine 137, and glutamine 140. The L-aspartate site is built by arginine 173 and arginine 223. Carbamoyl phosphate contacts are provided by glycine 266 and proline 267.

Belongs to the aspartate/ornithine carbamoyltransferase superfamily. ATCase family. In terms of assembly, heterododecamer (2C3:3R2) of six catalytic PyrB chains organized as two trimers (C3), and six regulatory PyrI chains organized as three dimers (R2).

The catalysed reaction is carbamoyl phosphate + L-aspartate = N-carbamoyl-L-aspartate + phosphate + H(+). Its pathway is pyrimidine metabolism; UMP biosynthesis via de novo pathway; (S)-dihydroorotate from bicarbonate: step 2/3. Catalyzes the condensation of carbamoyl phosphate and aspartate to form carbamoyl aspartate and inorganic phosphate, the committed step in the de novo pyrimidine nucleotide biosynthesis pathway. The protein is Aspartate carbamoyltransferase catalytic subunit of Helicobacter pylori (strain ATCC 700392 / 26695) (Campylobacter pylori).